A 788-amino-acid chain; its full sequence is Protein translocase subunit SecA 2 (788 aa).

Residues Gln-77, 95-99, and Asp-491 contribute to the ATP site; that span reads GEGKT.

It belongs to the SecA family. Monomer and homodimer. Part of the essential Sec protein translocation apparatus which comprises SecA, SecYEG and auxiliary proteins SecDF. Other proteins may also be involved.

It localises to the cell membrane. Its subcellular location is the cytoplasm. It carries out the reaction ATP + H2O + cellular proteinSide 1 = ADP + phosphate + cellular proteinSide 2.. In terms of biological role, part of the Sec protein translocase complex. Interacts with the SecYEG preprotein conducting channel. Has a central role in coupling the hydrolysis of ATP to the transfer of proteins into and across the cell membrane, serving as an ATP-driven molecular motor driving the stepwise translocation of polypeptide chains across the membrane. This is Protein translocase subunit SecA 2 from Lactobacillus johnsonii (strain CNCM I-12250 / La1 / NCC 533).